Consider the following 505-residue polypeptide: TBC1 domain family member 22B (505 aa).

Ala-2 carries the N-acetylalanine modification. Phosphoserine is present on residues Ser-58 and Ser-116. Residues 105–146 (SKLRVKPERSQSTTSDVPANYKVIKSSSDAQLSRNSSDTCLR) are disordered. Positions 129 to 146 (KSSSDAQLSRNSSDTCLR) are enriched in polar residues. Ser-154 bears the Phosphoserine mark. Positions 210–434 (GVPREVRPIT…RLWDTYQSEP (225 aa)) constitute a Rab-GAP TBC domain.

Interacts with ACBD3 and ARFGEF1. Interacts with YWHAB, YWHAE, YWHAG, YWHAH, YWHAQ and YWHAZ.

May act as a GTPase-activating protein for Rab family protein(s). The polypeptide is TBC1 domain family member 22B (TBC1D22B) (Homo sapiens (Human)).